The primary structure comprises 193 residues: dCTP deaminase (193 aa).

DCTP contacts are provided by residues 110–115, D128, 136–138, Y171, K178, and Q182; these read RSSLAR and VLE. Residue E138 is the Proton donor/acceptor of the active site. The tract at residues 169–193 is disordered; the sequence is RPYNRRQDAKYRDQQGAVASRIDKD.

It belongs to the dCTP deaminase family. In terms of assembly, homotrimer.

It catalyses the reaction dCTP + H2O + H(+) = dUTP + NH4(+). Its pathway is pyrimidine metabolism; dUMP biosynthesis; dUMP from dCTP (dUTP route): step 1/2. Its function is as follows. Catalyzes the deamination of dCTP to dUTP. The sequence is that of dCTP deaminase from Cronobacter sakazakii (strain ATCC BAA-894) (Enterobacter sakazakii).